A 41-amino-acid polypeptide reads, in one-letter code: Photosystem I reaction center subunit IX (41 aa).

Residues 7–27 (YLSTAPVVALIWFTFTAGLLI) traverse the membrane as a helical segment.

The protein belongs to the PsaJ family.

Its subcellular location is the plastid. It is found in the chloroplast thylakoid membrane. Functionally, may help in the organization of the PsaE and PsaF subunits. The chain is Photosystem I reaction center subunit IX from Pleurastrum terricola (Filamentous green alga).